Consider the following 812-residue polypeptide: Mitochondrial intermediate peptidase (812 aa).

The transit peptide at 1–35 (MLKLLRPRPWVCNSCLNRVAFPKPYPVGSRSTRWL) directs the protein to the mitochondrion. Positions 518 to 544 (STSEGGPAFGSPESAANDGMAASRGAS) are disordered. Residue histidine 587 coordinates Zn(2+). Glutamate 588 is a catalytic residue. Residues histidine 591 and histidine 594 each coordinate Zn(2+).

The protein belongs to the peptidase M3 family. It depends on Zn(2+) as a cofactor.

It is found in the mitochondrion matrix. The enzyme catalyses Release of an N-terminal octapeptide as second stage of processing of some proteins imported into the mitochondrion.. Functionally, cleaves proteins, imported into the mitochondrion, to their mature size. While most mitochondrial precursor proteins are processed to the mature form in one step by mitochondrial processing peptidase (MPP), the sequential cleavage by MIP of an octapeptide after initial processing by MPP is a required step for a subgroup of nuclear-encoded precursor proteins destined for the matrix or the inner membrane. In Pyricularia oryzae (strain 70-15 / ATCC MYA-4617 / FGSC 8958) (Rice blast fungus), this protein is Mitochondrial intermediate peptidase (OCT1).